Consider the following 120-residue polypeptide: Large ribosomal subunit protein uL18 (120 aa).

This sequence belongs to the universal ribosomal protein uL18 family. Part of the 50S ribosomal subunit; part of the 5S rRNA/L5/L18/L25 subcomplex. Contacts the 5S and 23S rRNAs.

This is one of the proteins that bind and probably mediate the attachment of the 5S RNA into the large ribosomal subunit, where it forms part of the central protuberance. The chain is Large ribosomal subunit protein uL18 from Staphylococcus haemolyticus (strain JCSC1435).